Here is a 122-residue protein sequence, read N- to C-terminus: Small ribosomal subunit protein uS13 (122 aa).

Residues 95–122 (GLPVRGQKTKTNARTRKGPKRTVANKKK) form a disordered region.

Belongs to the universal ribosomal protein uS13 family. As to quaternary structure, part of the 30S ribosomal subunit. Forms a loose heterodimer with protein S19. Forms two bridges to the 50S subunit in the 70S ribosome.

In terms of biological role, located at the top of the head of the 30S subunit, it contacts several helices of the 16S rRNA. In the 70S ribosome it contacts the 23S rRNA (bridge B1a) and protein L5 of the 50S subunit (bridge B1b), connecting the 2 subunits; these bridges are implicated in subunit movement. Contacts the tRNAs in the A and P-sites. The chain is Small ribosomal subunit protein uS13 from Agathobacter rectalis (strain ATCC 33656 / DSM 3377 / JCM 17463 / KCTC 5835 / VPI 0990) (Eubacterium rectale).